A 273-amino-acid chain; its full sequence is Phosphatidylglycerol--prolipoprotein diacylglyceryl transferase (273 aa).

The next 7 membrane-spanning stretches (helical) occupy residues 21–41, 60–80, 95–115, 124–144, 176–196, 203–223, and 237–257; these read VSIR…LWLA, LLFA…VIFY, VWTG…AMFW, FFGV…MGRM, SQLY…NWFI, GSVS…VEFV, and ISMG…MMVW. Position 143 (R143) interacts with a 1,2-diacyl-sn-glycero-3-phospho-(1'-sn-glycerol).

This sequence belongs to the Lgt family.

The protein localises to the cell inner membrane. It catalyses the reaction L-cysteinyl-[prolipoprotein] + a 1,2-diacyl-sn-glycero-3-phospho-(1'-sn-glycerol) = an S-1,2-diacyl-sn-glyceryl-L-cysteinyl-[prolipoprotein] + sn-glycerol 1-phosphate + H(+). The protein operates within protein modification; lipoprotein biosynthesis (diacylglyceryl transfer). Functionally, catalyzes the transfer of the diacylglyceryl group from phosphatidylglycerol to the sulfhydryl group of the N-terminal cysteine of a prolipoprotein, the first step in the formation of mature lipoproteins. This Vibrio parahaemolyticus serotype O3:K6 (strain RIMD 2210633) protein is Phosphatidylglycerol--prolipoprotein diacylglyceryl transferase.